The following is a 229-amino-acid chain: Bcl-2-like protein 1 (229 aa).

The BH4 signature appears at 4–24; it reads SNRELVIDFVSYKLSQRGHCW. The BH3 signature appears at 82 to 96; the sequence is VRQALRDAGDEFELR. A BH1 motif is present at residues 125–144; it reads ELFHDGVNWGRIVAFFSFGG. Residues 176-191 carry the BH2 motif; that stretch reads PWIQENGGWERFVDLY. The chain crosses the membrane as a helical span at residues 206-223; sequence FNKWLLTGATVAGVLLLG.

Belongs to the Bcl-2 family. In terms of tissue distribution, highest expression in organs with lymphoid development.

The protein resides in the mitochondrion membrane. Its subcellular location is the nucleus membrane. It is found in the mitochondrion matrix. It localises to the cytoplasm. The protein localises to the cytoskeleton. The protein resides in the microtubule organizing center. Its subcellular location is the centrosome. It is found in the cytosol. It localises to the cytoplasmic vesicle. The protein localises to the secretory vesicle. The protein resides in the synaptic vesicle membrane. In terms of biological role, dominant regulator of apoptotic cell death. The long form displays cell death repressor activity, whereas the short isoform promotes apoptosis. Also acts as a regulator of G2 checkpoint and progression to cytokinesis during mitosis. In Gallus gallus (Chicken), this protein is Bcl-2-like protein 1 (BCL2L1).